Consider the following 590-residue polypeptide: Cyclin-dependent kinase-like 3 (590 aa).

The 283-residue stretch at 4–286 (YETLGKVGEG…SSDLLHHEYF (283 aa)) folds into the Protein kinase domain. Residues 10–18 (VGEGSYGTV) and Lys33 contribute to the ATP site. A [NKR]KIAxRE motif is present at residues 45-51 (KIAMREI). The active-site Proton acceptor is Asp125. Thr158 carries the post-translational modification Phosphothreonine. Tyr160 is subject to Phosphotyrosine. 2 disordered regions span residues 459 to 508 (RAKK…SNEN) and 547 to 590 (LKRE…PDVE). Polar residues predominate over residues 466-477 (SSQSIGQVMPNS). Basic and acidic residues-rich tracts occupy residues 547–556 (LKRESKKTDS) and 580–590 (TERKKNLPDVE).

The protein belongs to the protein kinase superfamily. CMGC Ser/Thr protein kinase family. CDC2/CDKX subfamily.

The protein localises to the cytoplasm. The catalysed reaction is L-seryl-[protein] + ATP = O-phospho-L-seryl-[protein] + ADP + H(+). The enzyme catalyses L-threonyl-[protein] + ATP = O-phospho-L-threonyl-[protein] + ADP + H(+). This is Cyclin-dependent kinase-like 3 from Macaca fascicularis (Crab-eating macaque).